Here is a 317-residue protein sequence, read N- to C-terminus: tRNA dimethylallyltransferase (317 aa).

ATP is bound at residue Gly14–Thr21. Thr16–Thr21 is a substrate binding site. An interaction with substrate tRNA region spans residues Asp39–Gln42.

It belongs to the IPP transferase family. Monomer. Mg(2+) is required as a cofactor.

It carries out the reaction adenosine(37) in tRNA + dimethylallyl diphosphate = N(6)-dimethylallyladenosine(37) in tRNA + diphosphate. Functionally, catalyzes the transfer of a dimethylallyl group onto the adenine at position 37 in tRNAs that read codons beginning with uridine, leading to the formation of N6-(dimethylallyl)adenosine (i(6)A). The sequence is that of tRNA dimethylallyltransferase from Bacillus cereus (strain AH187).